Reading from the N-terminus, the 101-residue chain is Apolipoprotein C-III (101 aa).

The first 20 residues, 1-20, serve as a signal peptide directing secretion; the sequence is MQPRMLLIVALVALLASARA. At Met-64 the chain carries Methionine sulfoxide. The segment at 69–101 is lipid-binding; the sequence is KSLKGYWSKFTDKFTGLWESGPEDQLTTPTLEP. An O-linked (GalNAc...) threonine glycan is attached at Thr-96.

This sequence belongs to the apolipoprotein C3 family. In terms of processing, the most abundant glycoforms are characterized by an O-linked disaccharide galactose linked to N-acetylgalactosamine (Gal-GalNAc), further modified with up to 3 sialic acid residues. Less abundant glycoforms are characterized by more complex and fucosylated glycan moieties. O-glycosylated on Thr-96 with a core 1 or possibly core 8 glycan. In terms of tissue distribution, synthesized predominantly in liver and to a lesser degree in intestine.

It is found in the secreted. Component of triglyceride-rich very low density lipoproteins (VLDL) and high density lipoproteins (HDL) in plasma. Plays a multifaceted role in triglyceride homeostasis. Intracellularly, promotes hepatic very low density lipoprotein 1 (VLDL1) assembly and secretion; extracellularly, attenuates hydrolysis and clearance of triglyceride-rich lipoproteins (TRLs). Impairs the lipolysis of TRLs by inhibiting lipoprotein lipase and the hepatic uptake of TRLs by remnant receptors. Formed of several curved helices connected via semiflexible hinges, so that it can wrap tightly around the curved micelle surface and easily adapt to the different diameters of its natural binding partners. This Rattus norvegicus (Rat) protein is Apolipoprotein C-III (Apoc3).